We begin with the raw amino-acid sequence, 142 residues long: Protein E6 (142 aa).

2 zinc fingers span residues 30-66 and 103-139; these read CVFC…CTPC and CFDC…CRNC.

It belongs to the papillomaviridae E6 protein family. Forms homodimers. Interacts with ubiquitin-protein ligase UBE3A/E6-AP; this interaction stimulates UBE3A ubiquitin activity. Interacts with host BAK1.

It is found in the host cytoplasm. The protein localises to the host nucleus. In terms of biological role, plays a major role in the induction and maintenance of cellular transformation. E6 associates with host UBE3A/E6-AP ubiquitin-protein ligase and modulates its activity. Protects host keratinocytes from apoptosis by mediating the degradation of host BAK1. May also inhibit host immune response. In Homo sapiens (Human), this protein is Protein E6.